The chain runs to 158 residues: S-ribosylhomocysteine lyase (158 aa).

Fe cation-binding residues include H56, H60, and C125.

It belongs to the LuxS family. Homodimer. It depends on Fe cation as a cofactor.

The catalysed reaction is S-(5-deoxy-D-ribos-5-yl)-L-homocysteine = (S)-4,5-dihydroxypentane-2,3-dione + L-homocysteine. Involved in the synthesis of autoinducer 2 (AI-2) which is secreted by bacteria and is used to communicate both the cell density and the metabolic potential of the environment. The regulation of gene expression in response to changes in cell density is called quorum sensing. Catalyzes the transformation of S-ribosylhomocysteine (RHC) to homocysteine (HC) and 4,5-dihydroxy-2,3-pentadione (DPD). The chain is S-ribosylhomocysteine lyase from Leuconostoc mesenteroides subsp. mesenteroides (strain ATCC 8293 / DSM 20343 / BCRC 11652 / CCM 1803 / JCM 6124 / NCDO 523 / NBRC 100496 / NCIMB 8023 / NCTC 12954 / NRRL B-1118 / 37Y).